A 145-amino-acid polypeptide reads, in one-letter code: Acidic phospholipase A2 (145 aa).

Positions 1 to 21 (MYPAHLLVLLAVCVSLLGAAS) are cleaved as a signal peptide. The propeptide occupies 22–27 (IPPLPL). 7 cysteine pairs are disulfide-bonded: Cys-38–Cys-98, Cys-54–Cys-144, Cys-56–Cys-72, Cys-71–Cys-125, Cys-78–Cys-118, Cys-87–Cys-111, and Cys-105–Cys-116. Tyr-55 and Gly-57 together coordinate Ca(2+). His-75 is a catalytic residue. Residue Asp-76 participates in Ca(2+) binding. Asp-119 is a catalytic residue.

It belongs to the phospholipase A2 family. Group I subfamily. D49 sub-subfamily. The cofactor is Ca(2+). Expressed by the venom gland.

Its subcellular location is the secreted. It catalyses the reaction a 1,2-diacyl-sn-glycero-3-phosphocholine + H2O = a 1-acyl-sn-glycero-3-phosphocholine + a fatty acid + H(+). In terms of biological role, PLA2 catalyzes the calcium-dependent hydrolysis of the 2-acyl groups in 3-sn-phosphoglycerides. In Notechis scutatus scutatus (Mainland tiger snake), this protein is Acidic phospholipase A2.